The following is a 558-amino-acid chain: MMQPTILLLKDGTDTSQGKAQIISNINAVQSIVEIVKTTLGPRGMDKLIEGNRGATISNDGATILNLLDIVHPAAKTLVDIAKAQDDEVGDGTTSVCLLAGELLKESKNFIEEGMHPQIVTKGYKEALKLALTFLQENSYSVADKSDGEKREMLLKCAQTSLNSKLLAHYKEFFSEMVVQAVETLDTNLLDKDLIGIKMVTGGSVTDSVLVKGVAFKKTFSYAGFEQQPKKFANPKICLLNIELELKAEKENAEIRIDNPDDYKSIVDAEWELIYEKLRKIVESGAQIVLSKLPIGDLATQYFADRNIFCAGRVDAEDIKRVQKATGSIVQTTVNGLSQDVLGTCGMFEEQQIGAERYNLFQDCPHSKSATIILRGGAEQFIAEAERSLNDAIMIVRRCMKANKIVPGGGAIELEISRLLRLHSRKTEGKVQLVINAFAKALEVIPKTIADNAGHDSIQVLNKLRQKHALESDQSKNFGVDINAVDGIGNNFENFVWEPIIVRKNAFSAATEAACTILSIDETVRNPKSEQPKAPPGGLRRGGPQGMAGLAKNARLGK.

A disordered region spans residues 524–558 (VRNPKSEQPKAPPGGLRRGGPQGMAGLAKNARLGK).

This sequence belongs to the TCP-1 chaperonin family. Heterooligomeric complex of about 850 to 900 kDa that forms two stacked rings, 12 to 16 nm in diameter.

It is found in the cytoplasm. In terms of biological role, molecular chaperone; assists the folding of proteins upon ATP hydrolysis. Known to play a role, in vitro, in the folding of actin and tubulin. The sequence is that of T-complex protein 1 subunit eta from Tetrahymena pyriformis.